The chain runs to 185 residues: Large ribosomal subunit protein bL25 (185 aa).

It belongs to the bacterial ribosomal protein bL25 family. CTC subfamily. In terms of assembly, part of the 50S ribosomal subunit; part of the 5S rRNA/L5/L18/L25 subcomplex. Contacts the 5S rRNA. Binds to the 5S rRNA independently of L5 and L18.

In terms of biological role, this is one of the proteins that binds to the 5S RNA in the ribosome where it forms part of the central protuberance. This chain is Large ribosomal subunit protein bL25, found in Chlamydia abortus (strain DSM 27085 / S26/3) (Chlamydophila abortus).